The chain runs to 1211 residues: DNA-directed RNA polymerase subunit beta' (1211 aa).

Residues Cys60, Cys62, Cys75, and Cys78 each contribute to the Zn(2+) site. Mg(2+) is bound by residues Asp449, Asp451, and Asp453. Residues Cys818, Cys892, Cys899, and Cys902 each coordinate Zn(2+).

The protein belongs to the RNA polymerase beta' chain family. In terms of assembly, the RNAP catalytic core consists of 2 alpha, 1 beta, 1 beta' and 1 omega subunit. When a sigma factor is associated with the core the holoenzyme is formed, which can initiate transcription. Requires Mg(2+) as cofactor. The cofactor is Zn(2+).

It catalyses the reaction RNA(n) + a ribonucleoside 5'-triphosphate = RNA(n+1) + diphosphate. Its function is as follows. DNA-dependent RNA polymerase catalyzes the transcription of DNA into RNA using the four ribonucleoside triphosphates as substrates. This Limosilactobacillus reuteri (strain DSM 20016) (Lactobacillus reuteri) protein is DNA-directed RNA polymerase subunit beta'.